We begin with the raw amino-acid sequence, 691 residues long: Elongation factor G (691 aa).

In terms of domain architecture, tr-type G spans 8–283 (DMQRNIGIMA…AVVDFLPSPV (276 aa)). GTP-binding positions include 17–24 (AHIDAGKT), 81–85 (DTPGH), and 135–138 (NKMD).

Belongs to the TRAFAC class translation factor GTPase superfamily. Classic translation factor GTPase family. EF-G/EF-2 subfamily.

The protein resides in the cytoplasm. Catalyzes the GTP-dependent ribosomal translocation step during translation elongation. During this step, the ribosome changes from the pre-translocational (PRE) to the post-translocational (POST) state as the newly formed A-site-bound peptidyl-tRNA and P-site-bound deacylated tRNA move to the P and E sites, respectively. Catalyzes the coordinated movement of the two tRNA molecules, the mRNA and conformational changes in the ribosome. The sequence is that of Elongation factor G from Nitratidesulfovibrio vulgaris (strain ATCC 29579 / DSM 644 / CCUG 34227 / NCIMB 8303 / VKM B-1760 / Hildenborough) (Desulfovibrio vulgaris).